Consider the following 524-residue polypeptide: Methylmalonyl-CoA carboxyltransferase 12S subunit (524 aa).

A CoA carboxyltransferase N-terminal domain is found at 13–268 (MEGRVEQLAE…NNTEEASFVN (256 aa)). The interval 13 to 506 (MEGRVEQLAE…RRKIASALEM (494 aa)) is carboxyltransferase. Positions 274–506 (SPNTELRDIV…RRKIASALEM (233 aa)) constitute a CoA carboxyltransferase C-terminal domain.

Homohexamer. Transcarboxylase is composed of three subunits: 1.3S, 5S, and 12S. The core of the enzyme is composed of six 12S subunits. On each side of the core there are three pairs of 5S subunits. Each 5S dimer is attached to the core by two 1.3S subunits. Thus the total number of chains is 30 (6 + 12 + 12).

The enzyme catalyses (S)-methylmalonyl-CoA + pyruvate = propanoyl-CoA + oxaloacetate. The 12S subunit specifically catalyzes the transfer of the carboxyl group of methylmalonyl CoA to the biotin of the 1.3S subunit forming propanoyl-CoA and carboxylated 1.3S-biotin. The polypeptide is Methylmalonyl-CoA carboxyltransferase 12S subunit (Propionibacterium freudenreichii subsp. shermanii).